We begin with the raw amino-acid sequence, 908 residues long: NADH-quinone oxidoreductase subunit G (908 aa).

Residues 2 to 83 form the 2Fe-2S ferredoxin-type domain; it reads ATIHVDGKEY…GTFISIDDEE (82 aa). The [2Fe-2S] cluster site is built by C34, C45, C48, and C67. The 4Fe-4S His(Cys)3-ligated-type domain maps to 83–122; it reads EAKQFRESVVEWLMTNHPHDCPVCEEGGNCHLQDMTVMTG. [4Fe-4S] cluster contacts are provided by H99, C103, C106, C112, C151, C154, C157, C201, C228, C231, C235, and C263. Residues 221–277 form the 4Fe-4S Mo/W bis-MGD-type domain; that stretch reads MQFAPSICQQCSIGCNISPGERYGELRRIENRYNGTVNHYFLCDRGRFGYGYVNLKD.

Belongs to the complex I 75 kDa subunit family. As to quaternary structure, composed of 13 different subunits. Subunits NuoCD, E, F, and G constitute the peripheral sector of the complex. [2Fe-2S] cluster serves as cofactor. It depends on [4Fe-4S] cluster as a cofactor.

It catalyses the reaction a quinone + NADH + 5 H(+)(in) = a quinol + NAD(+) + 4 H(+)(out). Its function is as follows. NDH-1 shuttles electrons from NADH, via FMN and iron-sulfur (Fe-S) centers, to quinones in the respiratory chain. The immediate electron acceptor for the enzyme in this species is believed to be ubiquinone. Couples the redox reaction to proton translocation (for every two electrons transferred, four hydrogen ions are translocated across the cytoplasmic membrane), and thus conserves the redox energy in a proton gradient. The polypeptide is NADH-quinone oxidoreductase subunit G (nuoG) (Escherichia coli O6:H1 (strain CFT073 / ATCC 700928 / UPEC)).